The primary structure comprises 404 residues: Deoxyguanosinetriphosphate triphosphohydrolase-like protein (404 aa).

Residues 1 to 32 are disordered; that stretch reads MAVGMAAPHATYASDPARSRGRLFDEPPSKTR. Residues 22 to 32 are compositionally biased toward basic and acidic residues; sequence RLFDEPPSKTR. One can recognise an HD domain in the interval 69-217; it reads RLTHTLEVAQ…AAIADDIAYD (149 aa).

The protein belongs to the dGTPase family. Type 2 subfamily.

The protein is Deoxyguanosinetriphosphate triphosphohydrolase-like protein of Nitrobacter hamburgensis (strain DSM 10229 / NCIMB 13809 / X14).